The chain runs to 928 residues: DNA polymerase I (928 aa).

The 5'-3' exonuclease domain maps to 1-323 (MVQIPQNPLI…ADEAPEVTAT (323 aa)). Positions 324 to 517 (VISYDNYVTI…LHLKMWPDLQ (194 aa)) constitute a 3'-5' exonuclease domain. The tract at residues 324–928 (VISYDNYVTI…GSGENWDQAH (605 aa)) is klenow fragment. Residues 521-928 (GPLNVFENIE…GSGENWDQAH (408 aa)) are polymerase.

It belongs to the DNA polymerase type-A family. In terms of assembly, single-chain monomer with multiple functions.

The enzyme catalyses DNA(n) + a 2'-deoxyribonucleoside 5'-triphosphate = DNA(n+1) + diphosphate. Functionally, in addition to polymerase activity, this DNA polymerase exhibits 3'-5' and 5'-3' exonuclease activity. It is able to utilize nicked circular duplex DNA as a template and can unwind the parental DNA strand from its template. Genetic interactions among priB, dam, lexA, nagC, polA, rdgB, rdgB, rep and uup link the PriA-PriB replication restart pathway to DNA double-strand break repair. This Escherichia coli (strain K12) protein is DNA polymerase I (polA).